Here is a 102-residue protein sequence, read N- to C-terminus: Small ribosomal subunit protein uS10 (102 aa).

This sequence belongs to the universal ribosomal protein uS10 family. Part of the 30S ribosomal subunit.

Its function is as follows. Involved in the binding of tRNA to the ribosomes. In Halalkalibacterium halodurans (strain ATCC BAA-125 / DSM 18197 / FERM 7344 / JCM 9153 / C-125) (Bacillus halodurans), this protein is Small ribosomal subunit protein uS10.